A 431-amino-acid chain; its full sequence is 3-deoxy-D-manno-octulosonic acid transferase (431 aa).

A helical; Signal-anchor membrane pass occupies residues 5-27 (WLTSRLYDAFLVCAFFVSAPRIF). Glu-67 (proton acceptor) is an active-site residue. CMP contacts are provided by residues 275–276 (PR), 315–317 (MGV), and 342–345 (NLLE).

This sequence belongs to the glycosyltransferase group 1 family. Glycosyltransferase 30 subfamily.

The protein resides in the cell inner membrane. It carries out the reaction lipid IVA (E. coli) + CMP-3-deoxy-beta-D-manno-octulosonate = alpha-Kdo-(2-&gt;6)-lipid IVA (E. coli) + CMP + H(+). It catalyses the reaction alpha-Kdo-(2-&gt;6)-lipid IVA (E. coli) + CMP-3-deoxy-beta-D-manno-octulosonate = alpha-Kdo-(2-&gt;4)-alpha-Kdo-(2-&gt;6)-lipid IVA (E. coli) + CMP + H(+). The enzyme catalyses alpha-Kdo-(2-&gt;4)-alpha-Kdo-(2-&gt;6)-lipid IVA (E. coli) + CMP-3-deoxy-beta-D-manno-octulosonate = alpha-Kdo-(2-&gt;8)-alpha-Kdo-(2-&gt;4)-alpha-Kdo-(2-&gt;6)-lipid IVA (E. coli) + CMP + H(+). Its pathway is bacterial outer membrane biogenesis; LPS core biosynthesis. Functionally, involved in lipopolysaccharide (LPS) biosynthesis. Catalyzes the transfer of three 3-deoxy-D-manno-octulosonate (Kdo) residues from CMP-Kdo to lipid IV(A), the tetraacyldisaccharide-1,4'-bisphosphate precursor of lipid A. Thus generates the genus-specific LPS epitope of Chlamydia, composed of the trisaccharide alpha-Kdo-(2-&gt;8)-alpha-Kdo-(2-&gt;4)-alpha-Kdo. This is 3-deoxy-D-manno-octulosonic acid transferase (waaA) from Chlamydia trachomatis serovar A (strain ATCC VR-571B / DSM 19440 / HAR-13).